The primary structure comprises 285 residues: Probable ribosomal RNA small subunit methyltransferase A (285 aa).

S-adenosyl-L-methionine contacts are provided by H29, L31, G58, E79, D107, and N122.

This sequence belongs to the class I-like SAM-binding methyltransferase superfamily. rRNA adenine N(6)-methyltransferase family. RsmA subfamily.

It is found in the cytoplasm. In terms of biological role, specifically dimethylates two adjacent adenosines in the loop of a conserved hairpin near the 3'-end of 16S rRNA in the 30S particle. May play a critical role in biogenesis of 30S subunits. The chain is Probable ribosomal RNA small subunit methyltransferase A from Haloarcula marismortui (strain ATCC 43049 / DSM 3752 / JCM 8966 / VKM B-1809) (Halobacterium marismortui).